A 35-amino-acid polypeptide reads, in one-letter code: MEALVYTFLLVGTLGIIFFAIFFREPPKIEVKEKK.

A helical membrane pass occupies residues 3–23 (ALVYTFLLVGTLGIIFFAIFF).

This sequence belongs to the PsbT family. PSII is composed of 1 copy each of membrane proteins PsbA, PsbB, PsbC, PsbD, PsbE, PsbF, PsbH, PsbI, PsbJ, PsbK, PsbL, PsbM, PsbT, PsbY, PsbZ, Psb30/Ycf12, at least 3 peripheral proteins of the oxygen-evolving complex and a large number of cofactors. It forms dimeric complexes.

The protein resides in the plastid. It is found in the chloroplast thylakoid membrane. Its function is as follows. Found at the monomer-monomer interface of the photosystem II (PS II) dimer, plays a role in assembly and dimerization of PSII. PSII is a light-driven water plastoquinone oxidoreductase, using light energy to abstract electrons from H(2)O, generating a proton gradient subsequently used for ATP formation. The chain is Photosystem II reaction center protein T from Zygnema circumcarinatum (Green alga).